Consider the following 223-residue polypeptide: Deoxyribose-phosphate aldolase (223 aa).

The active-site Proton donor/acceptor is the D91. K154 functions as the Schiff-base intermediate with acetaldehyde in the catalytic mechanism. Catalysis depends on K183, which acts as the Proton donor/acceptor.

It belongs to the DeoC/FbaB aldolase family. DeoC type 1 subfamily.

Its subcellular location is the cytoplasm. It carries out the reaction 2-deoxy-D-ribose 5-phosphate = D-glyceraldehyde 3-phosphate + acetaldehyde. The protein operates within carbohydrate degradation; 2-deoxy-D-ribose 1-phosphate degradation; D-glyceraldehyde 3-phosphate and acetaldehyde from 2-deoxy-alpha-D-ribose 1-phosphate: step 2/2. In terms of biological role, catalyzes a reversible aldol reaction between acetaldehyde and D-glyceraldehyde 3-phosphate to generate 2-deoxy-D-ribose 5-phosphate. This chain is Deoxyribose-phosphate aldolase, found in Geobacillus sp. (strain WCH70).